The primary structure comprises 324 residues: MSGCCFSFAATASTSSTSLLYLFTQKPKFSVDHLSLSTYNTHFNFKINSTKLKAHFPISSLYRSSIFLSTCASVSDGVEVVQEDDEEEVALSAEEEEEIEEKEERVESESVEGGRLYVGNLPFSMTSSQLSEIFAEAGTVANVEIVYDRVTDRSRGFAFVTMGSVEEAKEAIRLFDGSQVGGRTVKVNFPEVPRGGEREVMSAKIRSTYQGFVDSPHKLYVANLSWALTSQGLRDAFADQPGFMSAKVIYDRSSGRSRGFGFITFSSAEAMNSALDTMNEVELEGRPLRLNVAGQKAPVSSPPVVETSPENDSDNSELLSSLSS.

The transit peptide at 1–71 (MSGCCFSFAA…YRSSIFLSTC (71 aa)) directs the protein to the chloroplast. 2 RRM domains span residues 114–192 (GRLY…FPEV) and 217–296 (HKLY…AGQK). The interval 294 to 324 (GQKAPVSSPPVVETSPENDSDNSELLSSLSS) is disordered. Low complexity predominate over residues 298 to 308 (PVSSPPVVETS).

Its subcellular location is the plastid. It localises to the chloroplast. Its function is as follows. Could be involved in splicing and/or processing of chloroplast RNA's. The protein is 33 kDa ribonucleoprotein, chloroplastic of Nicotiana sylvestris (Wood tobacco).